A 136-amino-acid polypeptide reads, in one-letter code: Ribosome-binding factor A (136 aa).

The protein belongs to the RbfA family. Monomer. Binds 30S ribosomal subunits, but not 50S ribosomal subunits or 70S ribosomes.

Its subcellular location is the cytoplasm. Its function is as follows. One of several proteins that assist in the late maturation steps of the functional core of the 30S ribosomal subunit. Associates with free 30S ribosomal subunits (but not with 30S subunits that are part of 70S ribosomes or polysomes). Required for efficient processing of 16S rRNA. May interact with the 5'-terminal helix region of 16S rRNA. The sequence is that of Ribosome-binding factor A from Yersinia enterocolitica serotype O:8 / biotype 1B (strain NCTC 13174 / 8081).